The sequence spans 161 residues: Transcriptional repressor NrdR (161 aa).

The tract at residues 1–23 is disordered; sequence MRCPFCGHPDTQVKDSRPAEDGN. A zinc finger spans residues 3 to 34; it reads CPFCGHPDTQVKDSRPAEDGNAIRRRRQCPSC. Positions 11–23 are enriched in basic and acidic residues; that stretch reads TQVKDSRPAEDGN. Positions 49–139 constitute an ATP-cone domain; that stretch reads LTVMKKSGRR…VYKDFHKVED (91 aa).

Belongs to the NrdR family. The cofactor is Zn(2+).

Its function is as follows. Negatively regulates transcription of bacterial ribonucleotide reductase nrd genes and operons by binding to NrdR-boxes. In Maricaulis maris (strain MCS10) (Caulobacter maris), this protein is Transcriptional repressor NrdR.